Reading from the N-terminus, the 230-residue chain is Urease accessory protein UreF (230 aa).

It belongs to the UreF family. As to quaternary structure, ureD, UreF and UreG form a complex that acts as a GTP-hydrolysis-dependent molecular chaperone, activating the urease apoprotein by helping to assemble the nickel containing metallocenter of UreC. The UreE protein probably delivers the nickel.

The protein resides in the cytoplasm. Required for maturation of urease via the functional incorporation of the urease nickel metallocenter. The polypeptide is Urease accessory protein UreF (Cupriavidus necator (strain ATCC 17699 / DSM 428 / KCTC 22496 / NCIMB 10442 / H16 / Stanier 337) (Ralstonia eutropha)).